The primary structure comprises 118 residues: Ribonuclease P protein component (118 aa).

This sequence belongs to the RnpA family. In terms of assembly, consists of a catalytic RNA component (M1 or rnpB) and a protein subunit.

It catalyses the reaction Endonucleolytic cleavage of RNA, removing 5'-extranucleotides from tRNA precursor.. In terms of biological role, RNaseP catalyzes the removal of the 5'-leader sequence from pre-tRNA to produce the mature 5'-terminus. It can also cleave other RNA substrates such as 4.5S RNA. The protein component plays an auxiliary but essential role in vivo by binding to the 5'-leader sequence and broadening the substrate specificity of the ribozyme. The polypeptide is Ribonuclease P protein component (Rickettsia typhi (strain ATCC VR-144 / Wilmington)).